Reading from the N-terminus, the 777-residue chain is Polyribonucleotide nucleotidyltransferase (777 aa).

Positions 494 and 500 each coordinate Mg(2+). Positions 561 to 620 constitute a KH domain; that stretch reads PRIITLQIDPSKIGALIGPGGKTIRSIIEQTGAQIDVEDDGRVFVTTPDADGARMAQSLI. Positions 630-699 constitute an S1 motif domain; the sequence is GEIFTGKVVR…GTGKLSLSRR (70 aa). The segment at 703-777 is disordered; sequence TGETAEQRKS…NDRRGGGFRG (75 aa). The segment covering 718 to 727 has biased composition (gly residues); sequence GPRGGGGGGD. 2 stretches are compositionally biased toward basic and acidic residues: residues 728-761 and 768-777; these read RGPRPGGDRGPRPEGDRGPRPEGDRPREGGDRGP and NDRRGGGFRG.

It belongs to the polyribonucleotide nucleotidyltransferase family. The cofactor is Mg(2+).

The protein localises to the cytoplasm. It carries out the reaction RNA(n+1) + phosphate = RNA(n) + a ribonucleoside 5'-diphosphate. Functionally, involved in mRNA degradation. Catalyzes the phosphorolysis of single-stranded polyribonucleotides processively in the 3'- to 5'-direction. The protein is Polyribonucleotide nucleotidyltransferase of Herpetosiphon aurantiacus (strain ATCC 23779 / DSM 785 / 114-95).